The following is a 767-amino-acid chain: Cap-specific mRNA (nucleoside-2'-O-)-methyltransferase 2 (767 aa).

Residues 109 to 322 (ELCTQAWCKF…VYVVCLRYKG (214 aa)) enclose the Adrift-type SAM-dependent 2'-O-MTase domain. The active site involves lysine 117. Residues glycine 148, tryptophan 167, and aspartate 235 each contribute to the S-adenosyl-L-methionine site. Residue aspartate 235 is part of the active site. The Proton acceptor role is filled by lysine 275.

It localises to the nucleus. Its subcellular location is the cytoplasm. It catalyses the reaction a 5'-end (N(7)-methyl 5'-triphosphoguanosine)-(2'-O-methyl-ribonucleoside)-(ribonucleotide) in mRNA + S-adenosyl-L-methionine = a 5'-end (N(7)-methyl 5'-triphosphoguanosine)-(2'-O-methyl-ribonucleoside)-(2'-O-methyl-ribonucleotide) in mRNA + S-adenosyl-L-homocysteine + H(+). Functionally, S-adenosyl-L-methionine-dependent methyltransferase that mediates mRNA cap2 2'-O-ribose methylation to the 5'-cap structure of mRNAs. Methylates the ribose of the second nucleotide of a m(7)GpppG-capped mRNA and small nuclear RNA (snRNA) (cap0) to produce m(7)GpppRmpNm (cap2). Recognizes a guanosine cap on RNA independently of its N(7) methylation status. Display cap2 methylation on both cap0 and cap1. Displays a preference for cap1 RNAs. The sequence is that of Cap-specific mRNA (nucleoside-2'-O-)-methyltransferase 2 (Cmtr2) from Mus musculus (Mouse).